A 578-amino-acid polypeptide reads, in one-letter code: Putative multidrug export ATP-binding/permease protein SAB1799c (578 aa).

Topologically, residues 1 to 15 (MIKRYLQFVKPYKYR) are cytoplasmic. The chain crosses the membrane as a helical span at residues 16-36 (IFATIIVGIIKFGIPMLIPLL). Residues 16–306 (IFATIIVGII…LVASFTTLTQ (291 aa)) form the ABC transmembrane type-1 domain. Residues 37–59 (IKYAIDGVINNHALTTDEKVHHL) lie on the Extracellular side of the membrane. A helical membrane pass occupies residues 60–80 (TIAIGIALFIFVIVRPPIEFI). Over 81 to 138 (RQYLAQWTSNKILYDIRKKLYNHLQALSARFYANNQVGQVISRVINDVEQTKDFILTG) the chain is Cytoplasmic. The helical transmembrane segment at 139 to 159 (LMNIWLDCITIIIALSIMFFL) threads the bilayer. The Extracellular segment spans residues 160–162 (DVK). Residues 163 to 183 (LTLAALFIFPFYILTVYVFFG) traverse the membrane as a helical segment. Residues 184-242 (RLRKLTRERSQALAEVQGFLHERVQGISVVKSFAIEDNEAKNFDKKNANFLTRALKHTR) are Cytoplasmic-facing. A helical membrane pass occupies residues 243-262 (WNAYSFATINTVTDIGPIIV). Topologically, residues 263-267 (IGVGA) are extracellular. The helical transmembrane segment at 268–287 (YLAISGSITVGTLAAFVGYL) threads the bilayer. The Cytoplasmic segment spans residues 288–578 (ELLFGPLRRL…YEHLYSIQNL (291 aa)). The ABC transporter domain occupies 340–575 (IDIYHVNFQY…QGAYEHLYSI (236 aa)). 374 to 381 (GMSGGGKS) contacts ATP.

It belongs to the ABC transporter superfamily. In terms of assembly, homodimer.

It is found in the cell membrane. May be involved in multidrug export. Transmembrane domains (TMD) form a pore in the cell membrane and the ATP-binding domain (NBD) is responsible for energy generation. The sequence is that of Putative multidrug export ATP-binding/permease protein SAB1799c from Staphylococcus aureus (strain bovine RF122 / ET3-1).